The sequence spans 219 residues: MSAPAANGEVPTFKLVLVGDGGTGKTTFVKRHLTGEFEKKYIATIGVEVHPLSFYTNFGEIKFDVWDTAGQEKFGGLRDGYYINAQCAIIMFDVTSRITYKNVPNWHRDLVRVCENIPIVLCGNKVDVKERKVKAKTITFHRKKNLQYYDISAKSNYNFEKPFLWLARKLAGNPQLEFVASPALAPPEVQVDEQLMQQYQQEMEQATALPLPDEDDADL.

Ser2 bears the N-acetylserine mark. At Ser2 the chain carries Phosphoserine. One can recognise a Small GTPase Ran-type domain in the interval 9-173 (EVPTFKLVLV…LWLARKLAGN (165 aa)). 20 to 27 (DGGTGKTT) is a GTP binding site. Positions 39 to 47 (KKYIATIGV) are switch-I. Residues Gly70, 124–127 (NKVD), and 152–154 (SAK) each bind GTP. The tract at residues 70 to 86 (GQEKFGGLRDGYYINAQ) is switch-II.

This sequence belongs to the small GTPase superfamily. Ran family. Found in a nuclear export complex with RanGTP, exportin and pre-miRNA. Forms a complex with YRB1. Interacts with BUD5, CEX1, RRP12, SRM1, and DIS3/RRP44.

The protein localises to the nucleus. Its function is as follows. GTP-binding protein involved in nucleocytoplasmic transport. Required for the import of protein into the nucleus and also for RNA export. Essential for cell viability. By analogy with Ras, Ran may be activated when GTP is exchanged for bound GDP by RCC1 and inactivated when GTP is hydrolyzed by Ran upon activation by RanGAP1. This Saccharomyces cerevisiae (strain ATCC 204508 / S288c) (Baker's yeast) protein is GTP-binding nuclear protein GSP1/CNR1 (GSP1).